Here is a 343-residue protein sequence, read N- to C-terminus: Trans-enoyl reductase ACTTS2 (343 aa).

An NADP(+)-binding site is contributed by 42–45 (GDWK). 128-135 (VGITTVGQ) is a binding site for substrate. NADP(+)-binding positions include 162–165 (STAT), 185–188 (SPHN), and Tyr203. Position 268 to 272 (268 to 272 (GYTAL)) interacts with substrate. Residue 333 to 334 (VS) coordinates NADP(+).

It belongs to the zinc-containing alcohol dehydrogenase family. As to quaternary structure, monomer.

The protein operates within mycotoxin biosynthesis. Its function is as follows. Trans-enoyl reductase; part of the gene clusters that mediate the biosynthesis of the host-selective toxins (HSTs) ACT-toxins responsible for brown spot of tangerine disease by the tangerine pathotype which affects tangerines and mandarins. ACT-toxins consist of three moieties, 9,10-epoxy-8-hydroxy-9-methyl-decatrienoic acid (EDA), valine and a polyketide. ACT-toxin I is toxic to both citrus and pear; toxin II the 5''-deoxy derivative of ACT-toxin I, is highly toxic to pear and slightly toxic to citrus. On cellular level, ACT-toxins affect plasma membrane of susceptible cells and cause a sudden increase in loss of K(+) after a few minutes of toxin treatment. The acyl-CoA ligase ACTT1, the hydrolase ACTT2, the enoyl-CoA hydratases ACTT3 and ACTT6, and the acyl-CoA synthetase ACTT5 are all involved in the biosynthesis of the AK-, AF- and ACT-toxin common 9,10-epoxy-8-hydroxy-9-methyl-decatrienoic acid (EDA) structural moiety. The exact role of each enzyme, and of additional enzymes identified within the AF-toxin clusters have still to be determined. On the other hand, ACTTS1 to ACTTS4 are specific to the tangerine pathotype. The function of ACTTS3 is to elongate the polyketide chain portion of ACT-toxin that is unique to this toxin. The enoyl-reductase ACTTS2 might complement the missing enoyl-reductase (ER) domain in ACTTS3 in the synthesis of the polyketide portion of ACT-toxin. The roles of the nonribosomal peptide synthetases-related proteins ACTTS1 and ACTTS4 have also still not been elucidated. This Alternaria alternata (Alternaria rot fungus) protein is Trans-enoyl reductase ACTTS2.